A 235-amino-acid chain; its full sequence is Phosphoribosylaminoimidazole-succinocarboxamide synthase (235 aa).

This sequence belongs to the SAICAR synthetase family.

The enzyme catalyses 5-amino-1-(5-phospho-D-ribosyl)imidazole-4-carboxylate + L-aspartate + ATP = (2S)-2-[5-amino-1-(5-phospho-beta-D-ribosyl)imidazole-4-carboxamido]succinate + ADP + phosphate + 2 H(+). The protein operates within purine metabolism; IMP biosynthesis via de novo pathway; 5-amino-1-(5-phospho-D-ribosyl)imidazole-4-carboxamide from 5-amino-1-(5-phospho-D-ribosyl)imidazole-4-carboxylate: step 1/2. This is Phosphoribosylaminoimidazole-succinocarboxamide synthase from Nautilia profundicola (strain ATCC BAA-1463 / DSM 18972 / AmH).